Reading from the N-terminus, the 194-residue chain is ATP-dependent Clp protease proteolytic subunit (194 aa).

The Nucleophile role is filled by S97. The active site involves H122.

This sequence belongs to the peptidase S14 family. In terms of assembly, fourteen ClpP subunits assemble into 2 heptameric rings which stack back to back to give a disk-like structure with a central cavity, resembling the structure of eukaryotic proteasomes.

The protein localises to the cytoplasm. It catalyses the reaction Hydrolysis of proteins to small peptides in the presence of ATP and magnesium. alpha-casein is the usual test substrate. In the absence of ATP, only oligopeptides shorter than five residues are hydrolyzed (such as succinyl-Leu-Tyr-|-NHMec, and Leu-Tyr-Leu-|-Tyr-Trp, in which cleavage of the -Tyr-|-Leu- and -Tyr-|-Trp bonds also occurs).. Its function is as follows. Cleaves peptides in various proteins in a process that requires ATP hydrolysis. Has a chymotrypsin-like activity. Plays a major role in the degradation of misfolded proteins. This chain is ATP-dependent Clp protease proteolytic subunit, found in Lactobacillus delbrueckii subsp. bulgaricus (strain ATCC BAA-365 / Lb-18).